Reading from the N-terminus, the 220-residue chain is Small ribosomal subunit protein eS1 (220 aa).

The protein belongs to the eukaryotic ribosomal protein eS1 family.

The chain is Small ribosomal subunit protein eS1 from Pyrobaculum arsenaticum (strain DSM 13514 / JCM 11321 / PZ6).